A 234-amino-acid polypeptide reads, in one-letter code: MTYKRVLLKLSGEALMGDKPYGIDPAIVQSIAEDVEKVIANNVQLAIVVGGGNIFRGLKGSADGMDRATADYVGMLATVMNAISLQDGLERVGVETRVQTAIEMQEIAEPYIRRRAMRHLEKGRVVVFGGGCGNPFFTTDTTAALRAAEINAEVVMKATKVDGVYDRDPNKFNEAKKYSSLSYQQVLSDEIAVMDSTAIALCKDNNIPIMVFDIFKKGNISRAVAGESIGSLIS.

9-12 (KLSG) provides a ligand contact to ATP. G51 serves as a coordination point for UMP. ATP is bound by residues G52 and R56. Residues D71 and 132–139 (CGNPFFTT) each bind UMP. T159, Y165, and D168 together coordinate ATP.

The protein belongs to the UMP kinase family. As to quaternary structure, homohexamer.

The protein localises to the cytoplasm. The catalysed reaction is UMP + ATP = UDP + ADP. Its pathway is pyrimidine metabolism; CTP biosynthesis via de novo pathway; UDP from UMP (UMPK route): step 1/1. Inhibited by UTP. Functionally, catalyzes the reversible phosphorylation of UMP to UDP. The polypeptide is Uridylate kinase (Prochlorococcus marinus (strain MIT 9515)).